Consider the following 428-residue polypeptide: Glutamate-1-semialdehyde 2,1-aminomutase (428 aa).

The residue at position 265 (Lys-265) is an N6-(pyridoxal phosphate)lysine.

This sequence belongs to the class-III pyridoxal-phosphate-dependent aminotransferase family. HemL subfamily. As to quaternary structure, homodimer. Requires pyridoxal 5'-phosphate as cofactor.

It is found in the cytoplasm. It catalyses the reaction (S)-4-amino-5-oxopentanoate = 5-aminolevulinate. Its pathway is porphyrin-containing compound metabolism; protoporphyrin-IX biosynthesis; 5-aminolevulinate from L-glutamyl-tRNA(Glu): step 2/2. In Aeromonas salmonicida (strain A449), this protein is Glutamate-1-semialdehyde 2,1-aminomutase.